Consider the following 430-residue polypeptide: MDSASADASVTGSGNAKGSSAERVNGGGKFYKLEILVSDPQKRAGEAGLGPYVSYQISTRTDNPSYHGNQKASFDDIIVVHRRYNDVVLLHDILQNDHPTCIIPPLPDKKVLQYIAGDRFGRRFTQRRCHSLQNFLRRVSQHPILSTSKVLEIFLVGNEWDTYRKNIAGTLQNAQKEDVTDAVMNAFKKVHNQNEEFTEIRDRSDKLDNSVNRINKVFHRVVKKNEAIIEDYSKLGLTLQELQELVSSDNDKLADSLKVFIEGVTQFSYGLQDLNMFIDYEYLIDLKDLSHYIGSMKQTMRLKDQKQIDYEELSDYLTKSIKEKNNLISGYGGGNFLTSKLEELAGYNQEASRRDKINKLESTISSLTTELETAKKVADTFEQETLKEVKKFEEIKNDELKISLNNLADENIKFYERMLETWEKVDQSLR.

Over residues 1–18 (MDSASADASVTGSGNAKG) the composition is skewed to polar residues. Residues 1-22 (MDSASADASVTGSGNAKGSSAE) form a disordered region. In terms of domain architecture, PX spans 33-162 (LEILVSDPQK…IFLVGNEWDT (130 aa)). Arg-83, Lys-109, and Arg-128 together coordinate a 1,2-diacyl-sn-glycero-3-phospho-(1D-myo-inositol-3-phosphate). Positions 351-414 (ASRRDKINKL…NNLADENIKF (64 aa)) form a coiled coil.

It belongs to the sorting nexin family.

The protein localises to the cytoplasm. Its subcellular location is the cytosol. The protein resides in the preautophagosomal structure membrane. It is found in the endosome membrane. Its function is as follows. Sorting nexin, involved in the separation or division of vacuoles throughout the entire life cycle of the cells. Involved in retrieval of late-Golgi SNAREs from post-Golgi endosomes to the trans-Golgi network, for cytoplasm to vacuole transport (Cvt), and autophagy of large cargos including mitophagy, pexophagy and glycophagy. The sequence is that of Sorting nexin-4 (SNX4) from Candida glabrata (strain ATCC 2001 / BCRC 20586 / JCM 3761 / NBRC 0622 / NRRL Y-65 / CBS 138) (Yeast).